Consider the following 507-residue polypeptide: Histidine ammonia-lyase (507 aa).

The segment at residues 141 to 143 (ASG) is a cross-link (5-imidazolinone (Ala-Gly)). 2,3-didehydroalanine (Ser) is present on Ser142.

The protein belongs to the PAL/histidase family. Contains an active site 4-methylidene-imidazol-5-one (MIO), which is formed autocatalytically by cyclization and dehydration of residues Ala-Ser-Gly.

The protein resides in the cytoplasm. It carries out the reaction L-histidine = trans-urocanate + NH4(+). The protein operates within amino-acid degradation; L-histidine degradation into L-glutamate; N-formimidoyl-L-glutamate from L-histidine: step 1/3. The sequence is that of Histidine ammonia-lyase from Burkholderia lata (strain ATCC 17760 / DSM 23089 / LMG 22485 / NCIMB 9086 / R18194 / 383).